Reading from the N-terminus, the 436-residue chain is Adenylosuccinate synthetase (436 aa).

Residues 12-18 and 40-42 each bind GTP; these read GDEGKGK and GHT. The Proton acceptor role is filled by Asp13. Mg(2+) is bound by residues Asp13 and Gly40. IMP is bound by residues 13-16, 38-41, Thr128, Arg142, Gln223, Thr238, and Arg302; these read DEGK and NAGH. His41 functions as the Proton donor in the catalytic mechanism. 298 to 304 serves as a coordination point for substrate; sequence TTTGRRR. Residues Arg304, 330–332, and 412–414 each bind GTP; these read KLD and SLG.

The protein belongs to the adenylosuccinate synthetase family. In terms of assembly, homodimer. Mg(2+) serves as cofactor.

It is found in the cytoplasm. The enzyme catalyses IMP + L-aspartate + GTP = N(6)-(1,2-dicarboxyethyl)-AMP + GDP + phosphate + 2 H(+). It functions in the pathway purine metabolism; AMP biosynthesis via de novo pathway; AMP from IMP: step 1/2. Plays an important role in the de novo pathway of purine nucleotide biosynthesis. Catalyzes the first committed step in the biosynthesis of AMP from IMP. This Prochlorococcus marinus (strain MIT 9312) protein is Adenylosuccinate synthetase.